The primary structure comprises 207 residues: MTQTSSPLRVGVGGPVGSGKTALLEVLCKKMRNHFEIAVVTNDIYTKEDQRILTEAGALAAERIVGVETGGCPHTAIREDASMNLAAVEALSEKFGNLDVVFVESGGDNLSATFSPELADMTIYVIDVAEGEKIPRKGGPGITKSDLLVINKIDLAPYVGARLDVMESDTNRMRPEKPWTFANLKAGQGVDTIIDFIVTHGMLTPKA.

14 to 21 (GPVGSGKT) is a GTP binding site.

Belongs to the SIMIBI class G3E GTPase family. UreG subfamily. Homodimer. UreD, UreF and UreG form a complex that acts as a GTP-hydrolysis-dependent molecular chaperone, activating the urease apoprotein by helping to assemble the nickel containing metallocenter of UreC. The UreE protein probably delivers the nickel.

It localises to the cytoplasm. In terms of biological role, facilitates the functional incorporation of the urease nickel metallocenter. This process requires GTP hydrolysis, probably effectuated by UreG. The polypeptide is Urease accessory protein UreG (Tolumonas auensis (strain DSM 9187 / NBRC 110442 / TA 4)).